The sequence spans 107 residues: Integration host factor subunit alpha (107 aa).

It belongs to the bacterial histone-like protein family. Heterodimer of an alpha and a beta chain.

Functionally, this protein is one of the two subunits of integration host factor, a specific DNA-binding protein that functions in genetic recombination as well as in transcriptional and translational control. This is Integration host factor subunit alpha from Bartonella tribocorum (strain CIP 105476 / IBS 506).